The chain runs to 116 residues: Large ribosomal subunit protein bL17 (116 aa).

It belongs to the bacterial ribosomal protein bL17 family. In terms of assembly, part of the 50S ribosomal subunit. Contacts protein L32.

The polypeptide is Large ribosomal subunit protein bL17 (Prochlorococcus marinus (strain NATL2A)).